Reading from the N-terminus, the 149-residue chain is Protein FAM72C (149 aa).

Belongs to the FAM72 family.

The sequence is that of Protein FAM72C (FAM72C) from Homo sapiens (Human).